The sequence spans 431 residues: MEVGFKALLDDLDVLEKSLSDPALINKLRSHVENLATLSKCNPHRRSKVKELSSEVVDSNPYSRLMALQRMGIVDNYERIREFSVAIVGIGGVGSVAAEMLTRCGIGRLLLYDYDTVELANMNRLFFRPDQVGMTKTDAAVQTLAEINPDVVLESFTMNITTVQGFETFTSSLTNKSFCPSKEGGSGVDLVLSCVDNYEARMAVNQACNELRQTWMESGVSEDAVSGHIQLLVPGETACFACAPPLVVASGIDERTLKREGVCAASLPTTMGVVAGLLVQNSLKFLLNFGEVSPYLGYNSLKDFFPTMKMRPNPQCSNVACLERQKEYMLAKPERDAAAKAKMEADASTTIDEGPLHDDNEWNISVVDDENEKDTTKAASSSDTLPEGLTRELPVADEYEKAIAIASGSGETEEEDDLEDLKKQLEALNAA.

Residues glycine 92, aspartate 113, lysine 136, asparagine 159, and asparagine 197 each contribute to the ATP site. Zn(2+) contacts are provided by cysteine 239 and cysteine 242. Cysteine 263 serves as the catalytic Glycyl thioester intermediate. Residues cysteine 316 and cysteine 321 each contribute to the Zn(2+) site. Residues 339-396 (AKAKMEADASTTIDEGPLHDDNEWNISVVDDENEKDTTKAASSSDTLPEGLTRELPVA) are disordered.

This sequence belongs to the ubiquitin-activating E1 family. UBA5 subfamily.

Functionally, E1-like enzyme which activates UFM1. The chain is Ubiquitin-like modifier-activating enzyme 5 from Arabidopsis thaliana (Mouse-ear cress).